The following is a 100-amino-acid chain: Protein translation factor SUI1 homolog (100 aa).

Belongs to the SUI1 family.

The polypeptide is Protein translation factor SUI1 homolog (Thermoplasma volcanium (strain ATCC 51530 / DSM 4299 / JCM 9571 / NBRC 15438 / GSS1)).